A 269-amino-acid chain; its full sequence is Protein shisa-1 (269 aa).

Residues 1–18 (MEFIVLLTVCALLGLSCG) form the signal peptide. Over 19–98 (QHGEYCHGWT…LPPTVPTYFP (80 aa)) the chain is Extracellular. Residues 99 to 119 (FLLVGSIFVSFVILGSLVGLC) form a helical membrane-spanning segment. Topologically, residues 120-269 (CCKCLKPEDD…TVCSGSPSKC (150 aa)) are cytoplasmic. Residues 129-167 (DTQVSGPAPIQSRLLDQDPSTDTSRHSSSSSASMPRPPI) form a disordered region. Over residues 146 to 162 (DPSTDTSRHSSSSSASM) the composition is skewed to low complexity.

Belongs to the shisa family. Interacts with immature forms of fzd8 and fgfr.

The protein localises to the endoplasmic reticulum. The protein resides in the membrane. Its function is as follows. Required for head formation during gastrulation. Functions as an inhibitor for the caudalizing signals wnt and fgf, does not inhibit bmp, activin and nodal signaling in head formation process. Induces retention of fzd8 in the endoplasmic reticulum and inhibits trafficking of fzd8 to the cell surface. This is Protein shisa-1 (shisa1) from Xenopus laevis (African clawed frog).